We begin with the raw amino-acid sequence, 249 residues long: DNA repair protein RecO (249 aa).

The protein belongs to the RecO family.

Involved in DNA repair and RecF pathway recombination. The chain is DNA repair protein RecO from Lactobacillus delbrueckii subsp. bulgaricus (strain ATCC 11842 / DSM 20081 / BCRC 10696 / JCM 1002 / NBRC 13953 / NCIMB 11778 / NCTC 12712 / WDCM 00102 / Lb 14).